A 456-amino-acid polypeptide reads, in one-letter code: tRNA modification GTPase MnmE (456 aa).

Residues Arg-24, Glu-81, and Lys-120 each coordinate (6S)-5-formyl-5,6,7,8-tetrahydrofolate. One can recognise a TrmE-type G domain in the interval 216–379; that stretch reads GMTVVIAGRP…LRDHLKACMG (164 aa). A K(+)-binding site is contributed by Asn-226. GTP-binding positions include 226–231, 245–251, 270–273, and 335–338; these read NAGKSS, TAIAGTT, DTAG, and NKAD. Ser-230 is a Mg(2+) binding site. K(+) contacts are provided by Thr-245, Ile-247, and Thr-250. Residue Thr-251 coordinates Mg(2+). (6S)-5-formyl-5,6,7,8-tetrahydrofolate is bound at residue Lys-456.

It belongs to the TRAFAC class TrmE-Era-EngA-EngB-Septin-like GTPase superfamily. TrmE GTPase family. Homodimer. Heterotetramer of two MnmE and two MnmG subunits. Requires K(+) as cofactor.

It is found in the cytoplasm. Exhibits a very high intrinsic GTPase hydrolysis rate. Involved in the addition of a carboxymethylaminomethyl (cmnm) group at the wobble position (U34) of certain tRNAs, forming tRNA-cmnm(5)s(2)U34. This is tRNA modification GTPase MnmE from Pseudomonas putida (strain W619).